A 370-amino-acid chain; its full sequence is MKKGFSLPLWVAGAARSALKKLVGLPFDNYELIKIPNEKKEIKIEIHSVGLLKDDSHALGISFAKSGLYLDITQNLEIWTIASLERNSFNNPLQTNPINIIAGSGVGIKEDTSEICISDFAKEVLYENLLDIIPEGFNLKLEIIFPNGVFLAERTSNKSFGIVDGLSIIGTSAETYSSASPDQLEEAKTNLAKLVQNDFKGKVVFVIGENGLNLAKNCNLKFPILKVGNWIGPLIVDAAIKKVKTVILFGYHGKLIKLAGGIFHTHNHLADGRIEILVYLAVQEKVPTEIIVQLSHLKNLEEALLLLERFDKSIAEKLFLNLSNTIEKRSFTYVNRYVKTDMEIASIIFDRKREIRWAGTYGNKYISDFQ.

This sequence belongs to the CbiD family.

The enzyme catalyses Co-precorrin-5B + S-adenosyl-L-methionine = Co-precorrin-6A + S-adenosyl-L-homocysteine. It participates in cofactor biosynthesis; adenosylcobalamin biosynthesis; cob(II)yrinate a,c-diamide from sirohydrochlorin (anaerobic route): step 6/10. In terms of biological role, catalyzes the methylation of C-1 in cobalt-precorrin-5B to form cobalt-precorrin-6A. This is Cobalt-precorrin-5B C(1)-methyltransferase from Prochlorococcus marinus (strain MIT 9312).